The following is a 1350-amino-acid chain: ABC-type transporter MDR1 (1350 aa).

Over residues 1–11 the composition is skewed to basic and acidic residues; that stretch reads MDTVHEGHHGS. The interval 1-84 is disordered; sequence MDTVHEGHHG…DEGEDPFAHL (84 aa). Residues 22–33 show a composition bias toward polar residues; sequence VEVTNYEKTQLG. The span at 52–63 shows a compositional bias: basic residues; it reads KKHKSQKEKKHK. An ABC transmembrane type-1 1 domain is found at 121-411; the sequence is VLSALSSIIG…VAPNIQAFTT (291 aa). Helical transmembrane passes span 124-144, 170-190, 243-263, 271-291, 350-370, and 380-400; these read ALSS…FGGL, LYFL…TAGF, KVGL…VSFI, ILMS…GFIV, GSMI…AFWM, and IEVG…FALG. The 246-residue stretch at 446-691 folds into the ABC transporter 1 domain; it reads IELRNIRHIY…QGAYYNLVEA (246 aa). 481 to 488 is an ATP binding site; that stretch reads GESGSGKS. Positions 712 to 731 are enriched in basic and acidic residues; sequence KDQNLKHETTKGEQPEDGLK. Residues 712 to 734 are disordered; it reads KDQNLKHETTKGEQPEDGLKLAR. A run of 6 helical transmembrane segments spans residues 779 to 799, 830 to 850, 903 to 923, 929 to 949, 1014 to 1034, and 1044 to 1064; these read IGII…VFFA, FMLA…FAVC, LGTI…SLAI, LVCI…FWML, ASQS…GTLI, and FFLC…IFSF. The 292-residue stretch at 779-1070 folds into the ABC transmembrane type-1 2 domain; it reads IGIICSVITG…IFSFAPDMGK (292 aa). The ABC transporter 2 domain maps to 1105–1343; sequence IEFRDVHFRY…RGRYWELVNL (239 aa). Asn-1127 carries N-linked (GlcNAc...) asparagine glycosylation. 1140–1147 lines the ATP pocket; sequence GASGCGKS.

Belongs to the ABC transporter superfamily. ABCB family. Multidrug resistance exporter (TC 3.A.1.201) subfamily.

It is found in the cell membrane. Its function is as follows. ABC-type transporter that is involved in the secretion of liamocins, glycolipids (also called heavy oils) composed of a single mannitol or arabitol headgroup linked to either three, four or even six 3,5-dihydroxydecanoic ester tail-groups. The polypeptide is ABC-type transporter MDR1 (Aureobasidium melanogenum (Aureobasidium pullulans var. melanogenum)).